The sequence spans 602 residues: Alpha-glucosides permease MPH3 (602 aa).

Residues M1 to T106 lie on the Cytoplasmic side of the membrane. The helical transmembrane segment at T107–F127 threads the bilayer. Residues Q128–E142 are Extracellular-facing. A helical membrane pass occupies residues I143–L163. At Q164–T178 the chain is on the cytoplasmic side. A helical transmembrane segment spans residues L179–L199. G200 is a topological domain (extracellular). The chain crosses the membrane as a helical span at residues M201–V221. The Cytoplasmic segment spans residues S222–Y234. Residues Y235 to M255 traverse the membrane as a helical segment. At K256 to K270 the chain is on the extracellular side. Residues L271–P291 form a helical membrane-spanning segment. Over E292–R363 the chain is Cytoplasmic. The helical transmembrane segment at I364–T384 threads the bilayer. The Extracellular portion of the chain corresponds to Y385–S397. The helical transmembrane segment at F398–A418 threads the bilayer. At S419–D426 the chain is on the cytoplasmic side. A helical membrane pass occupies residues L427–C447. Topologically, residues S448–S459 are extracellular. The helical transmembrane segment at L460–V480 threads the bilayer. The Cytoplasmic portion of the chain corresponds to S481–T492. A helical transmembrane segment spans residues I493–Y513. The Extracellular portion of the chain corresponds to Q514–K525. A helical membrane pass occupies residues S526–P546. Over E547 to E602 the chain is Cytoplasmic.

The protein belongs to the major facilitator superfamily. Sugar transporter (TC 2.A.1.1) family.

It localises to the cell membrane. Functionally, high-affinity uptake of maltose and maltotriose. Also transports alpha-methylglucoside, glucose and turanose but not melezitose or trehalose. This is Alpha-glucosides permease MPH3 (MPH3) from Saccharomyces cerevisiae (strain YJM789) (Baker's yeast).